A 150-amino-acid chain; its full sequence is Urease accessory protein UreE (150 aa).

The protein belongs to the UreE family.

The protein resides in the cytoplasm. Its function is as follows. Involved in urease metallocenter assembly. Binds nickel. Probably functions as a nickel donor during metallocenter assembly. This chain is Urease accessory protein UreE, found in Staphylococcus saprophyticus subsp. saprophyticus (strain ATCC 15305 / DSM 20229 / NCIMB 8711 / NCTC 7292 / S-41).